A 489-amino-acid chain; its full sequence is Betaine aldehyde dehydrogenase (489 aa).

2 residues coordinate K(+): T26 and D93. Position 150 to 152 (150 to 152) interacts with NAD(+); sequence GAW. The Charge relay system role is filled by K162. 176–179 contributes to the NAD(+) binding site; that stretch reads KPSE. V180 is a binding site for K(+). Position 229-232 (229-232) interacts with NAD(+); it reads GVET. Residue L245 participates in K(+) binding. E251 (proton acceptor) is an active-site residue. Residues G253, C285, and E386 each contribute to the NAD(+) site. C285 functions as the Nucleophile in the catalytic mechanism. At C285 the chain carries Cysteine sulfenic acid (-SOH). 2 residues coordinate K(+): K456 and G459. Residue E463 is the Charge relay system of the active site.

The protein belongs to the aldehyde dehydrogenase family. As to quaternary structure, dimer of dimers. K(+) serves as cofactor.

It catalyses the reaction betaine aldehyde + NAD(+) + H2O = glycine betaine + NADH + 2 H(+). The protein operates within amine and polyamine biosynthesis; betaine biosynthesis via choline pathway; betaine from betaine aldehyde: step 1/1. Involved in the biosynthesis of the osmoprotectant glycine betaine. Catalyzes the irreversible oxidation of betaine aldehyde to the corresponding acid. The protein is Betaine aldehyde dehydrogenase of Burkholderia pseudomallei (strain 668).